The sequence spans 1019 residues: Clotting factor C (1019 aa).

The signal sequence occupies residues 1–25; sequence MVLASFLVSGLVLGILAQQMRPVQS. An EGF-like domain is found at 102-137; the sequence is YGTWCSGECQCKNGGICDQRTGACTCRDRYEGAHCE. Disulfide bonds link cysteine 110-cysteine 118, cysteine 112-cysteine 125, cysteine 127-cysteine 136, cysteine 142-cysteine 182, cysteine 168-cysteine 195, cysteine 199-cysteine 241, cysteine 227-cysteine 254, cysteine 260-cysteine 308, cysteine 294-cysteine 321, cysteine 331-cysteine 350, cysteine 354-cysteine 374, cysteine 464-cysteine 564, cysteine 538-cysteine 556, cysteine 576-cysteine 621, cysteine 607-cysteine 634, and cysteine 720-cysteine 748. Sushi domains are found at residues 140-197, 198-256, and 258-323; these read KGCP…KCIR, ECAK…QCKK, and VFCP…SCVK. Residues 325 to 421 enclose the LCCL domain; the sequence is ADREVDCDSK…EELKSLARSF (97 aa). Residues 436–568 enclose the C-type lectin domain; the sequence is CPDGWFEVEE…PSSFACMMDL (133 aa). N-linked (GlcNAc...) asparagine glycosylation is found at asparagine 523 and asparagine 534. Sushi domains lie at 574-636 and 689-750; these read AKCD…RCIK and PRSS…SCIP. 3 N-linked (GlcNAc...) asparagine glycosylation sites follow: asparagine 624, asparagine 740, and asparagine 767. Positions 763–1019 constitute a Peptidase S1 domain; that stretch reads IWNGNSTEIG…VFLSWIRQFI (257 aa). Residues cysteine 794 and cysteine 810 are joined by a disulfide bond. Catalysis depends on charge relay system residues histidine 809 and aspartate 865. Asparagine 912 carries N-linked (GlcNAc...) asparagine glycosylation. Residues cysteine 932 and cysteine 951 are joined by a disulfide bond. Aspartate 960 is a substrate binding site. A disulfide bridge links cysteine 962 with cysteine 996. The Charge relay system role is filled by serine 966.

The protein belongs to the peptidase S1 family. As to quaternary structure, heterodimer of a light chain and a heavy chain linked by a disulfide bond. Forms a covalent heterodimer with intracellular coagulation inhibitor 1/LICI-1. Forms a covalent heterodimer with intracellular coagulation inhibitor 2/LICI-2. Post-translationally, N-glycosylated. Lipopolysaccharide (LPS) activates clotting factor C by inducing the proteolytic cleavage of the clotting factor C light chain into clotting factor C chains A and B. Clotting factor C chains heavy, A and B remain associated via interchain disulfide bonds. As to expression, expressed in hemocytes (at protein level).

The protein localises to the secreted. It carries out the reaction Selective cleavage of 103-Arg-|-Ser-104 and 124-Ile-|-Ile-125 bonds in Limulus clotting factor B to form activated factor B. Cleavage of -Pro-Arg-|-Xaa- bonds in synthetic substrates.. Its activity is regulated as follows. Activated by Gram-negative bacterial lipopolysaccharides. Inhibited by intracellular coagulation inhibitor 1/LICI-1 and to a lesser extent by intracellular coagulation inhibitors 2/LICI-2 and 3/LICI-3. Inhibited by the small molecule diisopropyl fluorophosphate (DFP). This enzyme is closely associated with an endotoxin-sensitive hemolymph coagulation system which may play important roles in both hemostasis and host defense mechanisms. Its active form catalyzes the activation of clotting factor B. The protein is Clotting factor C of Tachypleus tridentatus (Japanese horseshoe crab).